The following is a 312-amino-acid chain: Olfactory receptor 1D2 (312 aa).

Over 1-25 (MDGGNQSEGSEFLLLGMSESPEQQR) the chain is Extracellular. Residue N5 is glycosylated (N-linked (GlcNAc...) asparagine). A helical transmembrane segment spans residues 26–49 (ILFWMFLSMYLVTVVGNVLIILAI). Residues 50–57 (SSDSCLHT) lie on the Cytoplasmic side of the membrane. A helical membrane pass occupies residues 58 to 79 (PMYFFLANLSFTDLFFVTNTIP). Over 80 to 100 (KMLVNLQSQNKAISYAGCLTQ) the chain is Extracellular. C97 and C189 form a disulfide bridge. Residues 101–120 (LYFLVSLVALDNLILAVMAY) form a helical membrane-spanning segment. Residues 121–139 (DRYVAICCPLHYTTAMSPK) are Cytoplasmic-facing. The helical transmembrane segment at 140–158 (LCILLLSLCWVLSVLYGLI) threads the bilayer. Residues 159-196 (HTLLMTRVTFCGSRKIHYIFCEMYVLLRMACSNIQTNH) are Extracellular-facing. N-linked (GlcNAc...) asparagine glycosylation is present at N195. Residues 197-219 (TVLIATGCFIFLIPFGFVIISYV) form a helical membrane-spanning segment. Residues 220–236 (LIIRAILRIPSLSKKYK) lie on the Cytoplasmic side of the membrane. The helical transmembrane segment at 237 to 259 (AFSTCASHLGAVSLFYGTLCMVY) threads the bilayer. At 260-271 (LKPLHTYSVKDS) the chain is on the extracellular side. Residues 272-291 (VATVMYAVVTPMMNPFIYSL) form a helical membrane-spanning segment. Topologically, residues 292–312 (RNKDMHGALGRLLDKHFKRLT) are cytoplasmic.

Belongs to the G-protein coupled receptor 1 family.

Its subcellular location is the cell membrane. Functionally, odorant receptor. This is Olfactory receptor 1D2 (OR1D2) from Pan troglodytes (Chimpanzee).